The chain runs to 174 residues: Protein RESTRICTED TEV MOVEMENT 1 (174 aa).

The region spanning 1–152 (MKIGPVGKHD…LQYIGVYLRP (152 aa)) is the Jacalin-type lectin domain.

This sequence belongs to the jacalin lectin family. Self-interacts. Interacts with RTM3. As to expression, expressed at low levels exclusively in phloem-associated cells (e.g. sieve elements and adjacent cells).

The protein localises to the cytoplasm. In terms of biological role, required for the restriction of long-distance movement of the pathogenic tobacco etch virus (TEV) without causing a hypersensitive response or inducing systemic acquired resistance. This is Protein RESTRICTED TEV MOVEMENT 1 (RTM1) from Arabidopsis thaliana (Mouse-ear cress).